A 401-amino-acid chain; its full sequence is Large ribosomal subunit protein uL3 (401 aa).

Positions 1 to 22 (MSHRKFSAPRHGHMGFTPKKRS) are disordered.

This sequence belongs to the universal ribosomal protein uL3 family.

The protein resides in the cytoplasm. In terms of biological role, the L3 protein is a component of the large subunit of cytoplasmic ribosomes. This is Large ribosomal subunit protein uL3 (rpl-3) from Caenorhabditis elegans.